A 309-amino-acid chain; its full sequence is Glutaminase (309 aa).

Serine 64, asparagine 114, glutamate 160, asparagine 167, tyrosine 191, tyrosine 243, and valine 261 together coordinate substrate.

Belongs to the glutaminase family. In terms of assembly, homotetramer.

It catalyses the reaction L-glutamine + H2O = L-glutamate + NH4(+). The chain is Glutaminase from Methylorubrum extorquens (strain PA1) (Methylobacterium extorquens).